The chain runs to 563 residues: MFAQPFDHSFNNDDLFSQYVNIDGSSTDGNKDVSFPSDFDQFFSLDSLSSNCGEQSPIISTSKQQTHPSPQWAKDFWSLPPDAPSSLGQAPLAFQDTVHPSAVSDLNVNLEASSTTCPAETRSSPTTPPGTPRRKPKSALVTPKSIQRHREPNGRRGLQHKQSFSPSLTRPSQFQKGRMAYQEAWAHRLQNLNFLRSADDRFPLSPPPSDILPQQENIAADNSAVHIHHSGDSTEMHHHFDTSIFTPSPAISMPSPCTGVLSRQQARYLNHSNNSTVTSSPPSADDIFPSPHSSDPQSMSSWHSDALGTPGLFTPDLQSHDAQAWWPPMNARVPQRQPSYQQVVASPPPQQPIQNTTHQHDLANSQHDILQGGLMIQMDPSAYDMTATANSSFSSTTMAPTASSCQENHTYSHVPTAHAKYVDASSFATPQLHPQSRSPSLSPRADRSPKNGLAMHHSITMKAQRRQPGRKISSNSMNVPKPVKGLNGSGSPKGAKSVTVSFVNFTLNDSQKILTGVAPSGSSKTKARREQEARDRRRRISEAALNAVRKAGGDVEALEAVMF.

Polar residues-rich tracts occupy residues 54–69 (EQSP…THPS) and 160–175 (HKQS…SQFQ). 6 disordered regions span residues 54-81 (EQSP…SLPP), 112-176 (ASST…QFQK), 272-318 (SNNS…PDLQ), 334-356 (PQRQ…IQNT), 430-494 (PQLH…SPKG), and 516-538 (GVAP…DRRR). Over residues 272-305 (SNNSTVTSSPPSADDIFPSPHSSDPQSMSSWHSD) the composition is skewed to low complexity. Positions 430–441 (PQLHPQSRSPSL) are enriched in polar residues.

Belongs to the wetA family.

BrlA, abaA and wetA are pivotal regulators of conidiophore development and conidium maturation. They act individually and together to regulate their own expression and that of numerous other sporulation-specific genes. This chain is Developmental regulatory protein wetA, found in Aspergillus oryzae (strain ATCC 42149 / RIB 40) (Yellow koji mold).